A 3147-amino-acid polypeptide reads, in one-letter code: Bassianolide nonribosomal cyclodepsipeptide synthetase (3147 aa).

The span at 1 to 12 shows a compositional bias: polar residues; the sequence is MEPPNNANTGQL. Residues 1-23 are disordered; it reads MEPPNNANTGQLGPTLPNGTVDL. Positions 69 to 454 are condensation 1; that stretch reads HVVYEIPEDV…INKLQSTDGS (386 aa). An adenylation 1 region spans residues 495-887; sequence DDTPNKPAVC…GRMDSQVKIR (393 aa). The 77-residue stretch at 1015 to 1091 folds into the Carrier 1 domain; sequence PDASAGVTKL…SLQAAIGGSS (77 aa). An O-(pantetheine 4'-phosphoryl)serine modification is found at serine 1052. Positions 1109–1538 are condensation 2; it reads SYSQGRLWFL…QTLISVVPLT (430 aa). The interval 1567–1973 is adenylation 2; it reads FATQVASYPD…GRMDFQFKIR (407 aa). The S-adenosyl-L-methionine-dependent N-methyltransferase (MT) stretch occupies residues 2041–2181; the sequence is TYTELDTVSS…FPTRDYLEQV (141 aa). Carrier domains follow at residues 2515 to 2589 and 2615 to 2689; these read FPLS…RQQL and APTT…EVSQ. 2 positions are modified to O-(pantetheine 4'-phosphoryl)serine: serine 2549 and serine 2649. The tract at residues 2735–3139 is condensation 3; sequence QDVYLATHLQ…THLMEQVCNT (405 aa).

It belongs to the NRP synthetase family.

Bassianolide nonribosomal synthetase that mediates the biosynthesis of bassianolide (BSL), a non-ribosomal cyclodepsipeptide that shows insecticidal and cancer cell antiproliferative activity. BSLS first catalyzes the iterative synthesis of an enzyme-bound dipeptidol monomer intermediate from D-2-hydroxyisovalerate and L-leucine before performing the condensation and cyclization of 4 dipeptidol monomers to yield the cyclic tetrameric ester bassianolide. The N-methyltransferase MT domain is responsible for the methylation of the leucine residues of bassianolide. BSLS is flexible with both the amino acid and hydroxyl acid precursors, and produces bassianolide as the major product (containing N-methyl-L-Leu), together with small amounts of beauvericin and its analogs beauvericins A-C (containing N-methyl-L-Phe). The sequence is that of Bassianolide nonribosomal cyclodepsipeptide synthetase from Beauveria bassiana (strain ARSEF 2860) (White muscardine disease fungus).